We begin with the raw amino-acid sequence, 63 residues long: Hyphancin-3D (63 aa).

An N-terminal signal peptide occupies residues 1–22; sequence MNFSRIIFLVFACFVALASVSA. The propeptide at 23 to 26 is removed by a dipeptidylpeptidase; it reads APEP. Leu-61 is modified (leucine amide).

The protein belongs to the cecropin family.

Its subcellular location is the secreted. Its function is as follows. Has antibacterial activity. This Hyphantria cunea (Fall webworm moth) protein is Hyphancin-3D.